The sequence spans 355 residues: UDP-N-acetylglucosamine--N-acetylmuramyl-(pentapeptide) pyrophosphoryl-undecaprenol N-acetylglucosamine transferase (355 aa).

Residues 15-17, Asn-127, Arg-163, Ser-191, Ile-244, 263-268, and Gln-288 contribute to the UDP-N-acetyl-alpha-D-glucosamine site; these read TGG and ALTVSE.

This sequence belongs to the glycosyltransferase 28 family. MurG subfamily.

It localises to the cell inner membrane. It catalyses the reaction di-trans,octa-cis-undecaprenyl diphospho-N-acetyl-alpha-D-muramoyl-L-alanyl-D-glutamyl-meso-2,6-diaminopimeloyl-D-alanyl-D-alanine + UDP-N-acetyl-alpha-D-glucosamine = di-trans,octa-cis-undecaprenyl diphospho-[N-acetyl-alpha-D-glucosaminyl-(1-&gt;4)]-N-acetyl-alpha-D-muramoyl-L-alanyl-D-glutamyl-meso-2,6-diaminopimeloyl-D-alanyl-D-alanine + UDP + H(+). Its pathway is cell wall biogenesis; peptidoglycan biosynthesis. Its function is as follows. Cell wall formation. Catalyzes the transfer of a GlcNAc subunit on undecaprenyl-pyrophosphoryl-MurNAc-pentapeptide (lipid intermediate I) to form undecaprenyl-pyrophosphoryl-MurNAc-(pentapeptide)GlcNAc (lipid intermediate II). The polypeptide is UDP-N-acetylglucosamine--N-acetylmuramyl-(pentapeptide) pyrophosphoryl-undecaprenol N-acetylglucosamine transferase (Escherichia coli (strain 55989 / EAEC)).